A 622-amino-acid polypeptide reads, in one-letter code: Chaperone protein HscA homolog (622 aa).

Belongs to the heat shock protein 70 family.

Its function is as follows. Chaperone involved in the maturation of iron-sulfur cluster-containing proteins. Has a low intrinsic ATPase activity which is markedly stimulated by HscB. The polypeptide is Chaperone protein HscA homolog (Aromatoleum aromaticum (strain DSM 19018 / LMG 30748 / EbN1) (Azoarcus sp. (strain EbN1))).